A 399-amino-acid polypeptide reads, in one-letter code: S-adenosylmethionine synthase (399 aa).

His-16 contributes to the ATP binding site. Position 18 (Asp-18) interacts with Mg(2+). Glu-44 contacts K(+). Glu-57 and Gln-100 together coordinate L-methionine. Positions 100-110 are flexible loop; the sequence is QSPDIAQGVDD. ATP is bound by residues 174 to 176, 241 to 242, Asp-250, 256 to 257, Ala-273, and Lys-277; these read DAK, RF, and RK. Residue Asp-250 participates in L-methionine binding. Lys-281 contacts L-methionine.

The protein belongs to the AdoMet synthase family. In terms of assembly, homotetramer; dimer of dimers. Mg(2+) serves as cofactor. Requires K(+) as cofactor.

The protein localises to the cytoplasm. The enzyme catalyses L-methionine + ATP + H2O = S-adenosyl-L-methionine + phosphate + diphosphate. The protein operates within amino-acid biosynthesis; S-adenosyl-L-methionine biosynthesis; S-adenosyl-L-methionine from L-methionine: step 1/1. Functionally, catalyzes the formation of S-adenosylmethionine (AdoMet) from methionine and ATP. The overall synthetic reaction is composed of two sequential steps, AdoMet formation and the subsequent tripolyphosphate hydrolysis which occurs prior to release of AdoMet from the enzyme. In Latilactobacillus sakei subsp. sakei (strain 23K) (Lactobacillus sakei subsp. sakei), this protein is S-adenosylmethionine synthase.